We begin with the raw amino-acid sequence, 298 residues long: Pyruvate synthase subunit PorB (298 aa).

[4Fe-4S] cluster is bound by residues Cys-19, Cys-22, Cys-47, and Cys-218.

Heterotetramer of one alpha, one beta, one delta and one gamma chain. The cofactor is [4Fe-4S] cluster.

The enzyme catalyses 2 oxidized [2Fe-2S]-[ferredoxin] + pyruvate + CoA = 2 reduced [2Fe-2S]-[ferredoxin] + acetyl-CoA + CO2 + H(+). This chain is Pyruvate synthase subunit PorB (porB), found in Methanocaldococcus jannaschii (strain ATCC 43067 / DSM 2661 / JAL-1 / JCM 10045 / NBRC 100440) (Methanococcus jannaschii).